Here is a 351-residue protein sequence, read N- to C-terminus: Transaldolase (351 aa).

Lysine 138 acts as the Schiff-base intermediate with substrate in catalysis.

It belongs to the transaldolase family. Type 2 subfamily.

The protein resides in the cytoplasm. The catalysed reaction is D-sedoheptulose 7-phosphate + D-glyceraldehyde 3-phosphate = D-erythrose 4-phosphate + beta-D-fructose 6-phosphate. Its pathway is carbohydrate degradation; pentose phosphate pathway; D-glyceraldehyde 3-phosphate and beta-D-fructose 6-phosphate from D-ribose 5-phosphate and D-xylulose 5-phosphate (non-oxidative stage): step 2/3. In terms of biological role, transaldolase is important for the balance of metabolites in the pentose-phosphate pathway. This chain is Transaldolase, found in Neisseria gonorrhoeae (strain ATCC 700825 / FA 1090).